We begin with the raw amino-acid sequence, 158 residues long: ABA-responsive protein ABR18 (158 aa).

This sequence belongs to the BetVI family.

This chain is ABA-responsive protein ABR18, found in Pisum sativum (Garden pea).